A 515-amino-acid polypeptide reads, in one-letter code: Alpha,alpha-trehalose-phosphate synthase [UDP-forming] 1 (515 aa).

Residues Y97 and D151 each contribute to the D-glucose 6-phosphate site. 2 residues coordinate UDP: R287 and K292. 2 residues coordinate UDP-alpha-D-glucose: R287 and K292. Residue R325 coordinates D-glucose 6-phosphate. UDP contacts are provided by residues V364 and 390–394 (LVAYE). 386-394 (DGMNLVAYE) is a UDP-alpha-D-glucose binding site. The tract at residues 483 to 515 (GKFQSRKAKLPESADAEKPMNGSGESEESQTTQ) is disordered. Residues 491-500 (KLPESADAEK) are compositionally biased toward basic and acidic residues.

Belongs to the glycosyltransferase 20 family.

It catalyses the reaction D-glucose 6-phosphate + UDP-alpha-D-glucose = alpha,alpha-trehalose 6-phosphate + UDP + H(+). It functions in the pathway carbohydrate biosynthesis. Functionally, synthase catalytic subunit of the trehalose synthase complex that catalyzes the production of trehalose from glucose-6-phosphate and UDP-alpha-D-glucose in a two step process. The disaccharide trehalose serves as a storage carbohydrate that is mobilized during conidial germination. Regulates the level of trehalose as a protectant for cell integrity during thermal and oxidative stress. This Aspergillus fumigatus (strain ATCC MYA-4609 / CBS 101355 / FGSC A1100 / Af293) (Neosartorya fumigata) protein is Alpha,alpha-trehalose-phosphate synthase [UDP-forming] 1.